Reading from the N-terminus, the 370-residue chain is Cyclic dehypoxanthine futalosine synthase (370 aa).

A Radical SAM core domain is found at 50–295 (TTFVIGRNVN…QSSWVTMGPE (246 aa)). Residues cysteine 64, cysteine 68, and cysteine 71 each contribute to the [4Fe-4S] cluster site.

The protein belongs to the radical SAM superfamily. MqnC family. [4Fe-4S] cluster is required as a cofactor.

It carries out the reaction dehypoxanthine futalosine + S-adenosyl-L-methionine = cyclic dehypoxanthinylfutalosinate + 5'-deoxyadenosine + L-methionine + H(+). The protein operates within quinol/quinone metabolism; menaquinone biosynthesis. In terms of biological role, radical SAM enzyme that catalyzes the cyclization of dehypoxanthine futalosine (DHFL) into cyclic dehypoxanthine futalosine (CDHFL), a step in the biosynthesis of menaquinone (MK, vitamin K2). This is Cyclic dehypoxanthine futalosine synthase from Halalkalibacterium halodurans (strain ATCC BAA-125 / DSM 18197 / FERM 7344 / JCM 9153 / C-125) (Bacillus halodurans).